The following is a 1715-amino-acid chain: Pentafunctional AROM polypeptide (1715 aa).

A compositionally biased stretch (polar residues) spans 1–17 (MTSTASAQQPVLRTKTP). The disordered stretch occupies residues 1–26 (MTSTASAQQPVLRTKTPSYHAPPSTD). Residues 1–421 (MTSTASAQQP…VQNMASTVSD (421 aa)) form a 3-dehydroquinate synthase region. NAD(+) is bound by residues 71–73 (DQN), 112–115 (EASK), 143–145 (GGV), and aspartate 148. Arginine 159 is a 7-phospho-2-dehydro-3-deoxy-D-arabino-heptonate binding site. 168 to 169 (TT) contributes to the NAD(+) binding site. Residues aspartate 175 and lysine 181 each coordinate 7-phospho-2-dehydro-3-deoxy-D-arabino-heptonate. Lysine 190 is a binding site for NAD(+). Asparagine 191 is a binding site for 7-phospho-2-dehydro-3-deoxy-D-arabino-heptonate. NAD(+) is bound by residues 208-211 (WLKT) and asparagine 219. Position 223 (glutamate 223) interacts with Zn(2+). Residues 223–226 (EVVK) and lysine 287 contribute to the 7-phospho-2-dehydro-3-deoxy-D-arabino-heptonate site. Glutamate 297 functions as the Proton acceptor; for 3-dehydroquinate synthase activity in the catalytic mechanism. 7-phospho-2-dehydro-3-deoxy-D-arabino-heptonate is bound by residues 301–305 (RNLVN) and histidine 308. Zn(2+) is bound at residue histidine 308. Catalysis depends on histidine 312, which acts as the Proton acceptor; for 3-dehydroquinate synthase activity. 7-phospho-2-dehydro-3-deoxy-D-arabino-heptonate-binding residues include histidine 324 and lysine 393. Histidine 324 contacts Zn(2+). The EPSP synthase stretch occupies residues 434–895 (VTPIHEQPNK…WDDLERKLGI (462 aa)). Cysteine 877 functions as the For EPSP synthase activity in the catalytic mechanism. The segment at 948–1165 (HATIICIGMR…KGGRRTYFLS (218 aa)) is shikimate kinase. 955–962 (GMRASGKT) serves as a coordination point for ATP. The 3-dehydroquinase stretch occupies residues 1166-1389 (LTFPDVVPKL…AAPGQLSFRQ (224 aa)). Catalysis depends on histidine 1292, which acts as the Proton acceptor; for 3-dehydroquinate dehydratase activity. Lysine 1320 (schiff-base intermediate with substrate; for 3-dehydroquinate dehydratase activity) is an active-site residue. Residues 1402–1715 (ARRFALFGSP…AAWDVYLQRC (314 aa)) are shikimate dehydrogenase.

It in the N-terminal section; belongs to the sugar phosphate cyclases superfamily. Dehydroquinate synthase family. The protein in the 2nd section; belongs to the EPSP synthase family. This sequence in the 3rd section; belongs to the shikimate kinase family. In the 4th section; belongs to the type-I 3-dehydroquinase family. It in the C-terminal section; belongs to the shikimate dehydrogenase family. As to quaternary structure, homodimer. Zn(2+) is required as a cofactor.

It localises to the cytoplasm. The enzyme catalyses 7-phospho-2-dehydro-3-deoxy-D-arabino-heptonate = 3-dehydroquinate + phosphate. It carries out the reaction 3-dehydroquinate = 3-dehydroshikimate + H2O. The catalysed reaction is shikimate + NADP(+) = 3-dehydroshikimate + NADPH + H(+). It catalyses the reaction shikimate + ATP = 3-phosphoshikimate + ADP + H(+). The enzyme catalyses 3-phosphoshikimate + phosphoenolpyruvate = 5-O-(1-carboxyvinyl)-3-phosphoshikimate + phosphate. The protein operates within metabolic intermediate biosynthesis; chorismate biosynthesis; chorismate from D-erythrose 4-phosphate and phosphoenolpyruvate: step 2/7. Its pathway is metabolic intermediate biosynthesis; chorismate biosynthesis; chorismate from D-erythrose 4-phosphate and phosphoenolpyruvate: step 3/7. It functions in the pathway metabolic intermediate biosynthesis; chorismate biosynthesis; chorismate from D-erythrose 4-phosphate and phosphoenolpyruvate: step 4/7. It participates in metabolic intermediate biosynthesis; chorismate biosynthesis; chorismate from D-erythrose 4-phosphate and phosphoenolpyruvate: step 5/7. The protein operates within metabolic intermediate biosynthesis; chorismate biosynthesis; chorismate from D-erythrose 4-phosphate and phosphoenolpyruvate: step 6/7. Functionally, the AROM polypeptide catalyzes 5 consecutive enzymatic reactions in prechorismate polyaromatic amino acid biosynthesis. The protein is Pentafunctional AROM polypeptide of Mycosarcoma maydis (Corn smut fungus).